The following is an 855-amino-acid chain: MYILVWKKGQQIKTFHTLDEAAQFKAASNFDEAPMFSVTVAPAISASGGSNEATNLRRLMYLSKGTNPEECNPQFVAELARVATIRNREIGLSGFLMSSSPFLFQAIEGTDQDLDFLFAKISADPRHERCIVLANRPCTGRMSGVWHMKDSHMDSITTHDAMMTILYQIARSFSSMLTYLPKRAGNMLLSGLDPAAQPPEPKSVVVTFIYLVAYGSLLSNPYSTEQPAEVLSTFVDVCVKNLEGSGGIITKFITGICMASWPFNRTEEALTAIQQISEDLAQLPSQQAPGSSPSLMYSQAGVHYGRAMLCNAGSGKSDFTLLGDWINTTSRIATLAKKLTSPVLFSFQVRCLLGDEMREEIEGAVMDQVKGRDKPVVEYQFPGPERDVEVVGQKIEQFTPGRFRCQMRVGQYEALPISQRPPIFDDTPKCNPRPRTPGCEGRQRSHTLVDPHIMMAKLPGPSVSATGDTTVPTLTYISHATRPMSRLDLSAIMGTATRINALQRITGTLLHGNGLFVQTQEGPKEAEINLLLRIRQDTRRSDVATDHMPQPQERVYPSEWTLTSGKEEILAIFPPLQDVLSRLAKSFTAQETYVPSRVVSYLTAGNNPRELMPVSCGVVMTDICSLTSLTENSCLSEVWMICNTFIDACPSAICQEGAEVIKLIGNCVTAYFPGNNADSAVASAQELFTFCREHRQAIVDVLDVRGCVSYGVALDNGQVVMAQCGSEGLTEYVVAGAVSARVMEVEAITRGTCPRWATPLWSADRLSPQLRDHGIVPTPQAIEGLPCYGIAGEEFELDVDSIKLGIKALHAARSGEKPLTEPEEAKLDFSPGRVRHGDSGRRSNSAQGKLSIQVR.

A BLUF 1 domain is found at 56-149 (LRRLMYLSKG…GRMSGVWHMK (94 aa)). Positions 420–444 (RPPIFDDTPKCNPRPRTPGCEGRQR) are disordered. Positions 471 to 563 (VPTLTYISHA…RVYPSEWTLT (93 aa)) constitute a BLUF 2 domain. Residues 813-827 (RSGEKPLTEPEEAKL) show a composition bias toward basic and acidic residues. The interval 813–855 (RSGEKPLTEPEEAKLDFSPGRVRHGDSGRRSNSAQGKLSIQVR) is disordered. The segment covering 842 to 855 (RSNSAQGKLSIQVR) has biased composition (polar residues).

In terms of assembly, heterotetramer of two alpha and two beta subunits.

It is found in the cell projection. It localises to the cilium. The protein resides in the flagellum. The chain is Photoactivated adenylate cyclase subunit beta-like protein 1224-5/9F from Euglena gracilis.